The chain runs to 542 residues: Chaperonin GroEL (542 aa).

Residues 29 to 32 (TLGP), Lys-50, 86 to 90 (DGTTT), Gly-415, and Asp-495 contribute to the ATP site.

This sequence belongs to the chaperonin (HSP60) family. As to quaternary structure, forms a cylinder of 14 subunits composed of two heptameric rings stacked back-to-back. Interacts with the co-chaperonin GroES.

Its subcellular location is the cytoplasm. It carries out the reaction ATP + H2O + a folded polypeptide = ADP + phosphate + an unfolded polypeptide.. Functionally, together with its co-chaperonin GroES, plays an essential role in assisting protein folding. The GroEL-GroES system forms a nano-cage that allows encapsulation of the non-native substrate proteins and provides a physical environment optimized to promote and accelerate protein folding. This chain is Chaperonin GroEL, found in Azobacteroides pseudotrichonymphae genomovar. CFP2.